A 314-amino-acid polypeptide reads, in one-letter code: Phospholipid phosphatase-related protein type 5 (314 aa).

A run of 6 helical transmembrane segments spans residues Phe-5 to Ala-25, Ile-61 to Gly-81, Phe-120 to Val-140, Ala-194 to Ala-214, Val-223 to Tyr-243, and Val-250 to Asn-270.

This sequence belongs to the PA-phosphatase related phosphoesterase family.

The protein resides in the cell membrane. Induces filopodia formation and promotes neurite growth. The protein is Phospholipid phosphatase-related protein type 5 of Xenopus laevis (African clawed frog).